The chain runs to 334 residues: L-lactate dehydrogenase B-B chain (334 aa).

NAD(+)-binding positions include 30–58 (GQVGMACAVSVLLRELADELALVDVVEDK) and R100. 3 residues coordinate substrate: R107, N139, and R170. An NAD(+)-binding site is contributed by N139. The Proton acceptor role is filled by H194. Residue T249 coordinates substrate.

It belongs to the LDH/MDH superfamily. LDH family. In terms of assembly, homotetramer.

It localises to the cytoplasm. It carries out the reaction (S)-lactate + NAD(+) = pyruvate + NADH + H(+). It functions in the pathway fermentation; pyruvate fermentation to lactate; (S)-lactate from pyruvate: step 1/1. This is L-lactate dehydrogenase B-B chain from Danio rerio (Zebrafish).